The chain runs to 228 residues: MEKGVYIIGTSTDIGKTFISGLILKKLREEGRNAGYYKAVLSGAIKDKKGLIPLDCEEVMEISGLKESYENMVSYILENPYSPHLASEVEEVSISMEKIKKDYKSVRDKYDFILCEGSGGIVCPISFSEKKLMLEDIIKEFNLPIILVSNSGLGAINHTVLTVSYLRNLGLKVKGIILNKFNKSDIIHRDNKKIIKELTGVNNISTVPKIEDIEKYDLNELNEVLYGI.

Asp-13–Phe-18 is an ATP binding site. Residue Thr-17 coordinates Mg(2+). The active site involves Lys-38. Ser-42 serves as a coordination point for substrate. ATP contacts are provided by residues Asp-55, Glu-116 to Gly-119, Asn-179 to Lys-180, and Pro-208 to Ile-210. Mg(2+) is bound by residues Asp-55 and Glu-116.

The protein belongs to the dethiobiotin synthetase family. As to quaternary structure, homodimer. It depends on Mg(2+) as a cofactor.

The protein localises to the cytoplasm. The catalysed reaction is (7R,8S)-7,8-diammoniononanoate + CO2 + ATP = (4R,5S)-dethiobiotin + ADP + phosphate + 3 H(+). The protein operates within cofactor biosynthesis; biotin biosynthesis; biotin from 7,8-diaminononanoate: step 1/2. In terms of biological role, catalyzes a mechanistically unusual reaction, the ATP-dependent insertion of CO2 between the N7 and N8 nitrogen atoms of 7,8-diaminopelargonic acid (DAPA, also called 7,8-diammoniononanoate) to form a ureido ring. This Clostridium perfringens (strain ATCC 13124 / DSM 756 / JCM 1290 / NCIMB 6125 / NCTC 8237 / Type A) protein is ATP-dependent dethiobiotin synthetase BioD.